Consider the following 310-residue polypeptide: ADP-L-glycero-D-manno-heptose-6-epimerase (310 aa).

NADP(+)-binding positions include 10-11, 31-32, K38, K53, 75-79, and N92; these read FI, DN, and EGACS. Y140 serves as the catalytic Proton acceptor. Residue K144 coordinates NADP(+). Residue N169 participates in substrate binding. Residues V170 and K178 each contribute to the NADP(+) site. Residue K178 is the Proton acceptor of the active site. Residues S180, H187, 201-204, R209, and Y272 contribute to the substrate site; that span reads FEGS.

The protein belongs to the NAD(P)-dependent epimerase/dehydratase family. HldD subfamily. Homopentamer. The cofactor is NADP(+).

It carries out the reaction ADP-D-glycero-beta-D-manno-heptose = ADP-L-glycero-beta-D-manno-heptose. Its pathway is nucleotide-sugar biosynthesis; ADP-L-glycero-beta-D-manno-heptose biosynthesis; ADP-L-glycero-beta-D-manno-heptose from D-glycero-beta-D-manno-heptose 7-phosphate: step 4/4. It functions in the pathway bacterial outer membrane biogenesis; LPS core biosynthesis. Its function is as follows. Catalyzes the interconversion between ADP-D-glycero-beta-D-manno-heptose and ADP-L-glycero-beta-D-manno-heptose via an epimerization at carbon 6 of the heptose. The chain is ADP-L-glycero-D-manno-heptose-6-epimerase from Klebsiella pneumoniae.